Here is a 272-residue protein sequence, read N- to C-terminus: 5'-nucleotidase SurE (272 aa).

A divalent metal cation-binding residues include Asp-28, Asp-29, Ser-59, and Asn-115.

The protein belongs to the SurE nucleotidase family. The cofactor is a divalent metal cation.

Its subcellular location is the cytoplasm. The enzyme catalyses a ribonucleoside 5'-phosphate + H2O = a ribonucleoside + phosphate. Functionally, nucleotidase that shows phosphatase activity on nucleoside 5'-monophosphates. In Chlorobium chlorochromatii (strain CaD3), this protein is 5'-nucleotidase SurE.